The following is a 311-amino-acid chain: Cell division protein ZipA (311 aa).

Residues 1-5 (MQELR) are Periplasmic-facing. The chain crosses the membrane as a helical span at residues 6–26 (FVLIVVGALAIMALLFHGLWT). Residues 27–311 (SKKEGKAKFG…QIVEFKAANA (285 aa)) are Cytoplasmic-facing. The segment covering 32–54 (KAKFGDKPLSKLDLGESEPKESE) has biased composition (basic and acidic residues). A disordered region spans residues 32–60 (KAKFGDKPLSKLDLGESEPKESEMYVAPE).

The protein belongs to the ZipA family. In terms of assembly, interacts with FtsZ via their C-terminal domains.

Its subcellular location is the cell inner membrane. Functionally, essential cell division protein that stabilizes the FtsZ protofilaments by cross-linking them and that serves as a cytoplasmic membrane anchor for the Z ring. Also required for the recruitment to the septal ring of downstream cell division proteins. This is Cell division protein ZipA from Vibrio vulnificus (strain YJ016).